We begin with the raw amino-acid sequence, 284 residues long: Tropomyosin (284 aa).

The tract at residues 1–47 (MDAIKKKMQAMKIEKDNAMDRADAAEEKARQQQERVEKLEEELRDTQ) is disordered. A coiled-coil region spans residues 1-284 (MDAIKKKMQA…DQTFQELSGY (284 aa)). Positions 12-38 (KIEKDNAMDRADAAEEKARQQQERVEK) are enriched in basic and acidic residues.

Belongs to the tropomyosin family. Homodimer.

In terms of biological role, tropomyosin, in association with the troponin complex, plays a central role in the calcium dependent regulation of muscle contraction. This Trichinella pseudospiralis (Parasitic roundworm) protein is Tropomyosin.